The chain runs to 40 residues: Sarcotoxin-1D (40 aa).

This sequence belongs to the cecropin family.

It localises to the secreted. In terms of biological role, sarcotoxins, which are potent bactericidal proteins, are produced in response to injury. They are cytotoxic to both Gram-positive and Gram-negative bacteria. In Sarcophaga peregrina (Flesh fly), this protein is Sarcotoxin-1D.